The primary structure comprises 455 residues: Bifunctional protein GlmU (455 aa).

The pyrophosphorylase stretch occupies residues M1 to G229. UDP-N-acetyl-alpha-D-glucosamine contacts are provided by residues L11–G14, K25, Q76, G81–T82, Y103–D105, G140, E154, N169, and N227. D105 contributes to the Mg(2+) binding site. Position 227 (N227) interacts with Mg(2+). Residues L230 to S250 are linker. The segment at G251–T455 is N-acetyltransferase. Residues R333 and K351 each contribute to the UDP-N-acetyl-alpha-D-glucosamine site. The active-site Proton acceptor is H363. UDP-N-acetyl-alpha-D-glucosamine-binding residues include Y366 and N377. Acetyl-CoA-binding positions include A380, N386 to Y387, S405, A423, and R440.

This sequence in the N-terminal section; belongs to the N-acetylglucosamine-1-phosphate uridyltransferase family. The protein in the C-terminal section; belongs to the transferase hexapeptide repeat family. As to quaternary structure, homotrimer. Mg(2+) serves as cofactor.

It is found in the cytoplasm. The catalysed reaction is alpha-D-glucosamine 1-phosphate + acetyl-CoA = N-acetyl-alpha-D-glucosamine 1-phosphate + CoA + H(+). The enzyme catalyses N-acetyl-alpha-D-glucosamine 1-phosphate + UTP + H(+) = UDP-N-acetyl-alpha-D-glucosamine + diphosphate. It functions in the pathway nucleotide-sugar biosynthesis; UDP-N-acetyl-alpha-D-glucosamine biosynthesis; N-acetyl-alpha-D-glucosamine 1-phosphate from alpha-D-glucosamine 6-phosphate (route II): step 2/2. It participates in nucleotide-sugar biosynthesis; UDP-N-acetyl-alpha-D-glucosamine biosynthesis; UDP-N-acetyl-alpha-D-glucosamine from N-acetyl-alpha-D-glucosamine 1-phosphate: step 1/1. Its pathway is bacterial outer membrane biogenesis; LPS lipid A biosynthesis. Its function is as follows. Catalyzes the last two sequential reactions in the de novo biosynthetic pathway for UDP-N-acetylglucosamine (UDP-GlcNAc). The C-terminal domain catalyzes the transfer of acetyl group from acetyl coenzyme A to glucosamine-1-phosphate (GlcN-1-P) to produce N-acetylglucosamine-1-phosphate (GlcNAc-1-P), which is converted into UDP-GlcNAc by the transfer of uridine 5-monophosphate (from uridine 5-triphosphate), a reaction catalyzed by the N-terminal domain. This is Bifunctional protein GlmU from Hamiltonella defensa subsp. Acyrthosiphon pisum (strain 5AT).